Reading from the N-terminus, the 120-residue chain is Protein Wnt-9 (120 aa).

S1 carries the O-palmitoleoyl serine; by PORCN lipid modification. Residues C90 and C101 are joined by a disulfide bond.

Belongs to the Wnt family. Palmitoleoylation is required for efficient binding to frizzled receptors. Depalmitoleoylation leads to Wnt signaling pathway inhibition.

Its subcellular location is the secreted. The protein localises to the extracellular space. The protein resides in the extracellular matrix. Its function is as follows. Ligand for members of the frizzled family of seven transmembrane receptors. Probable developmental protein. May be a signaling molecule which affects the development of discrete regions of tissues. Is likely to signal over only few cell diameters. The chain is Protein Wnt-9 (WNT-9) from Alopias vulpinus (Common thresher shark).